Here is a 253-residue protein sequence, read N- to C-terminus: Small ribosomal subunit protein cS22 (253 aa).

A chloroplast-targeting transit peptide spans 1–56; sequence MATFLTNVVSIKPTIFSFQSESFTPLHTRVNVFSSKPFPSLAGTFSRSSRTRFIPY. 2 consecutive RRM domains span residues 76–154 and 177–253; these read RRVY…ITEK and YKVY…VNKA.

The protein belongs to the chloroplast-specific ribosomal protein cS22 family. In terms of assembly, component of the chloroplast small ribosomal subunit (SSU). Mature 70S chloroplast ribosomes of higher plants consist of a small (30S) and a large (50S) subunit. The 30S small subunit contains 1 molecule of ribosomal RNA (16S rRNA) and 24 different proteins. The 50S large subunit contains 3 rRNA molecules (23S, 5S and 4.5S rRNA) and 33 different proteins. In terms of tissue distribution, expressed constitutively in roots, stems, flower buds, flowers and leaves.

The protein resides in the plastid. Its subcellular location is the chloroplast. Component of the chloroplast ribosome (chloro-ribosome), a dedicated translation machinery responsible for the synthesis of chloroplast genome-encoded proteins, including proteins of the transcription and translation machinery and components of the photosynthetic apparatus. May have a role in the recruitment of stored chloroplast mRNAs for active protein synthesis. Bind single strand DNA (ssDNA) and RNA in vitro. Exhibits RNA chaperone activity. Negatively regulates resistance responses to abiotic stresses during seed germination (e.g. salt, dehydration, and low temperature) and seedling growth (e.g. salt). The chain is Small ribosomal subunit protein cS22 from Arabidopsis thaliana (Mouse-ear cress).